The chain runs to 267 residues: Ribosomal RNA small subunit methyltransferase A (267 aa).

S-adenosyl-L-methionine contacts are provided by asparagine 12, isoleucine 14, glycine 39, glutamate 60, aspartate 84, and asparagine 110.

This sequence belongs to the class I-like SAM-binding methyltransferase superfamily. rRNA adenine N(6)-methyltransferase family. RsmA subfamily.

The protein localises to the cytoplasm. It carries out the reaction adenosine(1518)/adenosine(1519) in 16S rRNA + 4 S-adenosyl-L-methionine = N(6)-dimethyladenosine(1518)/N(6)-dimethyladenosine(1519) in 16S rRNA + 4 S-adenosyl-L-homocysteine + 4 H(+). Specifically dimethylates two adjacent adenosines (A1518 and A1519) in the loop of a conserved hairpin near the 3'-end of 16S rRNA in the 30S particle. May play a critical role in biogenesis of 30S subunits. The sequence is that of Ribosomal RNA small subunit methyltransferase A from Mesoplasma florum (strain ATCC 33453 / NBRC 100688 / NCTC 11704 / L1) (Acholeplasma florum).